Reading from the N-terminus, the 372-residue chain is tRNA-specific 2-thiouridylase MnmA (372 aa).

ATP is bound by residues 11 to 18 and M37; that span reads GMSGGVDS. An interaction with target base in tRNA region spans residues 97 to 99; that stretch reads NPD. C102 serves as the catalytic Nucleophile. A disulfide bond links C102 and C199. G126 serves as a coordination point for ATP. The interaction with tRNA stretch occupies residues 149–151; it reads KDQ. Residue C199 is the Cysteine persulfide intermediate of the active site. The interval 309 to 310 is interaction with tRNA; sequence RY.

Belongs to the MnmA/TRMU family.

Its subcellular location is the cytoplasm. It carries out the reaction S-sulfanyl-L-cysteinyl-[protein] + uridine(34) in tRNA + AH2 + ATP = 2-thiouridine(34) in tRNA + L-cysteinyl-[protein] + A + AMP + diphosphate + H(+). Catalyzes the 2-thiolation of uridine at the wobble position (U34) of tRNA, leading to the formation of s(2)U34. The chain is tRNA-specific 2-thiouridylase MnmA from Staphylococcus aureus (strain USA300).